Here is a 93-residue protein sequence, read N- to C-terminus: Pyrimidine/purine nucleoside phosphorylase (93 aa).

It belongs to the nucleoside phosphorylase PpnP family.

It carries out the reaction a purine D-ribonucleoside + phosphate = a purine nucleobase + alpha-D-ribose 1-phosphate. The catalysed reaction is adenosine + phosphate = alpha-D-ribose 1-phosphate + adenine. It catalyses the reaction cytidine + phosphate = cytosine + alpha-D-ribose 1-phosphate. The enzyme catalyses guanosine + phosphate = alpha-D-ribose 1-phosphate + guanine. It carries out the reaction inosine + phosphate = alpha-D-ribose 1-phosphate + hypoxanthine. The catalysed reaction is thymidine + phosphate = 2-deoxy-alpha-D-ribose 1-phosphate + thymine. It catalyses the reaction uridine + phosphate = alpha-D-ribose 1-phosphate + uracil. The enzyme catalyses xanthosine + phosphate = alpha-D-ribose 1-phosphate + xanthine. Its function is as follows. Catalyzes the phosphorolysis of diverse nucleosides, yielding D-ribose 1-phosphate and the respective free bases. Can use uridine, adenosine, guanosine, cytidine, thymidine, inosine and xanthosine as substrates. Also catalyzes the reverse reactions. The sequence is that of Pyrimidine/purine nucleoside phosphorylase from Aliivibrio salmonicida (strain LFI1238) (Vibrio salmonicida (strain LFI1238)).